We begin with the raw amino-acid sequence, 530 residues long: MSMKWISVLLGLQLSCYFSSGSCGKVLVWPTEYSHWINVKTILDELVQRGHEVTVLTSSASILVDPNKLSAIKFEIYSAHLSRGDFEAFFIKLLNILIYDMPKDSFWTYFSLMQEFFWEFYECAQKLCKDVVLNKKLMTKLQESKFDLVLADTIIPCGELLAELLKIPLVYSLRFSPGYAFEKHSGGLPLPPSYVPVILSELTDQMTFMERVKNMLYVLYFDFWFQTINEKSWDQFYSEVLGRPTTLYELMRKADIWLIRTYWDFEYPHPLLPHFDFVGGLHCKPAKSLPTEMEEFVQSSGENGIVVFSLGSMVNNMTEERANVIASALAQIPQKVLWRFDGKKPDTLGPNTRLYKWLPQNDLLGHPKTKAFITHGGTNGIYEAIYHGIPMVGIPLFADQADNIVHMKAKGAAIRLDFSTMSSADLLNALRMVINDPSYKENAMKLSGIHHDQPIKPLDRAVFWIEYVMRHQGAKHLRPASHDLTWFQYHSLDVIGFLLACVATAIFVTTQCCLFCCRKVAKTGKKIKKE.

An N-terminal signal peptide occupies residues 1–24 (MSMKWISVLLGLQLSCYFSSGSCG). K136 is subject to N6-succinyllysine. N-linked (GlcNAc...) asparagine glycosylation is present at N316. A helical membrane pass occupies residues 495-515 (IGFLLACVATAIFVTTQCCLF).

The protein belongs to the UDP-glycosyltransferase family.

The protein localises to the microsome membrane. It localises to the endoplasmic reticulum membrane. The enzyme catalyses glucuronate acceptor + UDP-alpha-D-glucuronate = acceptor beta-D-glucuronoside + UDP + H(+). Functionally, UDPGTs are of major importance in the conjugation and subsequent elimination of potentially toxic xenobiotics and endogenous compounds. This isozyme has glucuronidating capacity on phenols, opioids, and carboxylic acid-containing drugs. This Canis lupus familiaris (Dog) protein is UDP-glucuronosyltransferase 2B31 (UGT2B31).